A 22-amino-acid chain; its full sequence is thr operon leader peptide (22 aa).

The segment at 1 to 22 (MRNISLTTTIITTTDTTGNGAG) is disordered. The span at 7–22 (TTTIITTTDTTGNGAG) shows a compositional bias: low complexity.

This sequence belongs to the thr operon leader peptide family.

In terms of biological role, this protein is involved in control of the biosynthesis of threonine. This Serratia marcescens protein is thr operon leader peptide.